We begin with the raw amino-acid sequence, 189 residues long: B3 domain-containing protein At2g32645 (189 aa).

A DNA-binding region (TF-B3) is located at residues Phe-33 to Ile-133.

It is found in the nucleus. This is B3 domain-containing protein At2g32645 from Arabidopsis thaliana (Mouse-ear cress).